Here is a 247-residue protein sequence, read N- to C-terminus: ATP synthase subunit a, chloroplastic (247 aa).

5 helical membrane passes run 38–58 (QVLITSWVVIALLLVSAILII), 95–115 (VPFIGTLFLFIFVSNWSGALL), 134–154 (INTTVALALLTSIAYFYAGLS), 199–219 (LVVVVLVSLVPLVVPIPVMFL), and 220–240 (GLFTSGIQALIFATLAAAYIG).

It belongs to the ATPase A chain family. As to quaternary structure, F-type ATPases have 2 components, CF(1) - the catalytic core - and CF(0) - the membrane proton channel. CF(1) has five subunits: alpha(3), beta(3), gamma(1), delta(1), epsilon(1). CF(0) has four main subunits: a, b, b' and c.

The protein resides in the plastid. It localises to the chloroplast thylakoid membrane. Functionally, key component of the proton channel; it plays a direct role in the translocation of protons across the membrane. The chain is ATP synthase subunit a, chloroplastic from Glycine max (Soybean).